The sequence spans 157 residues: SsrA-binding protein (157 aa).

Positions 128–157 (LARGKKQHDKRAAEKERDWEREKQRVMRRG) are disordered. Over residues 137-157 (KRAAEKERDWEREKQRVMRRG) the composition is skewed to basic and acidic residues.

It belongs to the SmpB family.

Its subcellular location is the cytoplasm. Its function is as follows. Required for rescue of stalled ribosomes mediated by trans-translation. Binds to transfer-messenger RNA (tmRNA), required for stable association of tmRNA with ribosomes. tmRNA and SmpB together mimic tRNA shape, replacing the anticodon stem-loop with SmpB. tmRNA is encoded by the ssrA gene; the 2 termini fold to resemble tRNA(Ala) and it encodes a 'tag peptide', a short internal open reading frame. During trans-translation Ala-aminoacylated tmRNA acts like a tRNA, entering the A-site of stalled ribosomes, displacing the stalled mRNA. The ribosome then switches to translate the ORF on the tmRNA; the nascent peptide is terminated with the 'tag peptide' encoded by the tmRNA and targeted for degradation. The ribosome is freed to recommence translation, which seems to be the essential function of trans-translation. This Methylococcus capsulatus (strain ATCC 33009 / NCIMB 11132 / Bath) protein is SsrA-binding protein.